Reading from the N-terminus, the 477-residue chain is Octopamine receptor (477 aa).

Residues 1 to 55 (MGQAATHVDANYTLINYTEEVIEDDRDACAVADDPKYPSSFGITLAVPEWEAICT) are Extracellular-facing. Residues asparagine 11 and asparagine 16 are each glycosylated (N-linked (GlcNAc...) asparagine). A helical transmembrane segment spans residues 56 to 78 (AIVLTLIIISTIVGNILVILSVF). Residues 79 to 88 (TYKPLRIVQN) lie on the Cytoplasmic side of the membrane. The chain crosses the membrane as a helical span at residues 89-110 (FFIVSLAVADLTVAILVLPLNV). At 111 to 127 (AYSILGQWVFGIYVCKM) the chain is on the extracellular side. The helical transmembrane segment at 128 to 148 (WLTCDIMCCTSSILNLCAIAL) threads the bilayer. Residues 149–168 (DRYWAITDPINYAQKRTLER) lie on the Cytoplasmic side of the membrane. The chain crosses the membrane as a helical span at residues 169 to 191 (VLLMIGVVWVLSLIISSPPLLGW). The Extracellular portion of the chain corresponds to 192-216 (NDWPDVFEPDTPCRLTSQPGFVIFS). A helical membrane pass occupies residues 217–238 (SSGSFYIPLVIMTVVYFEIYLA). At 239 to 405 (TKKRLRDRAK…LTRERRAART (167 aa)) the chain is on the cytoplasmic side. 2 disordered regions span residues 256-317 (SSGQ…SKDD) and 334-358 (VTDM…THED). 2 stretches are compositionally biased toward basic and acidic residues: residues 263-272 (NNKDDHHDQD) and 279-295 (NHNE…DNEK). Residues 296 to 312 (KKRTRKLTPKKKPKRKY) show a composition bias toward basic residues. The chain crosses the membrane as a helical span at residues 406 to 427 (LGIIMGVFVVCWLPFFVIYLVI). Over 428–439 (PFCASCCLSNKF) the chain is Extracellular. The helical transmembrane segment at 440–460 (INFITWLGYCNSALNPLIYTI) threads the bilayer. At 461–477 (FNMDFRRAFKKLLCMKP) the chain is on the cytoplasmic side.

It belongs to the G-protein coupled receptor 1 family.

The protein resides in the cell membrane. Its function is as follows. Receptor for octopamine. Octopamine (OA) is a neurotransmitter, neurohormone, and neuromodulator in invertebrates. The activity of this receptor is mediated by G proteins which activate adenylyl cyclase. The protein is Octopamine receptor of Heliothis virescens (Tobacco budworm moth).